Reading from the N-terminus, the 550-residue chain is Glucose-6-phosphate isomerase (550 aa).

The active-site Proton donor is the glutamate 356. Residues histidine 387 and lysine 515 contribute to the active site.

Belongs to the GPI family.

The protein resides in the cytoplasm. The enzyme catalyses alpha-D-glucose 6-phosphate = beta-D-fructose 6-phosphate. Its pathway is carbohydrate biosynthesis; gluconeogenesis. It participates in carbohydrate degradation; glycolysis; D-glyceraldehyde 3-phosphate and glycerone phosphate from D-glucose: step 2/4. Catalyzes the reversible isomerization of glucose-6-phosphate to fructose-6-phosphate. The chain is Glucose-6-phosphate isomerase from Aliivibrio salmonicida (strain LFI1238) (Vibrio salmonicida (strain LFI1238)).